A 381-amino-acid chain; its full sequence is Genome polyprotein (381 aa).

Positions 115-155 are disordered; sequence ANDTIDTGGNSKKDVKPEQGSIQPSSNKGKEKDVNAGTSGT.

This sequence belongs to the potyviridae genome polyprotein family. Genome polyprotein of potyviruses undergoes post-translational proteolytic processing by the main proteinase NIa-pro resulting in the production of at least ten individual proteins. The P1 proteinase and the HC-pro cleave only their respective C-termini autocatalytically. 6K1 is essential for proper proteolytic separation of P3 from CI.

The protein localises to the virion. The catalysed reaction is RNA(n) + a ribonucleoside 5'-triphosphate = RNA(n+1) + diphosphate. In terms of biological role, an RNA-dependent RNA polymerase that plays an essential role in the virus replication. Involved in aphid transmission, cell-to-cell and systemis movement, encapsidation of the viral RNA and in the regulation of viral RNA amplification. This chain is Genome polyprotein, found in Capsicum annuum (Capsicum pepper).